The following is a 319-amino-acid chain: Translocon-associated protein subunit alpha (319 aa).

The first 21 residues, Met1–Leu21, serve as a signal peptide directing secretion. The Lumenal segment spans residues Arg22 to Thr208. Residues Leu35–Ser76 are compositionally biased toward acidic residues. Residues Leu35 to Ala84 are disordered. Residues Asn137 and Asn192 are each glycosylated (N-linked (GlcNAc...) asparagine). Residues Ile209 to Leu229 form a helical membrane-spanning segment. Residues Leu230 to Ile319 lie on the Cytoplasmic side of the membrane. At Ser248 the chain carries Phosphoserine. Phosphothreonine is present on Thr261.

Belongs to the TRAP-alpha family. In terms of assembly, heterotetramer of TRAP-alpha, TRAP-beta, TRAP-delta and TRAP-gamma. Interacts with palmitoylated calnexin (CALX), the interaction is required for efficient folding of glycosylated proteins.

It is found in the endoplasmic reticulum membrane. Its function is as follows. TRAP proteins are part of a complex whose function is to bind calcium to the ER membrane and thereby regulate the retention of ER resident proteins. May be involved in the recycling of the translocation apparatus after completion of the translocation process or may function as a membrane-bound chaperone facilitating folding of translocated proteins. This Rattus norvegicus (Rat) protein is Translocon-associated protein subunit alpha (Ssr1).